The sequence spans 496 residues: Protein RepS (496 aa).

Residues 120–141 (SDILTTAIDLGFMPTLIIKSDK) mediate DNA binding.

Essential for replication. The protein is Protein RepS (repS) of Streptococcus pyogenes.